Here is a 256-residue protein sequence, read N- to C-terminus: 1-(5-phosphoribosyl)-5-[(5-phosphoribosylamino)methylideneamino] imidazole-4-carboxamide isomerase (256 aa).

Residue aspartate 9 is the Proton acceptor of the active site. The Proton donor role is filled by aspartate 130.

The protein belongs to the HisA/HisF family.

The protein localises to the cytoplasm. It carries out the reaction 1-(5-phospho-beta-D-ribosyl)-5-[(5-phospho-beta-D-ribosylamino)methylideneamino]imidazole-4-carboxamide = 5-[(5-phospho-1-deoxy-D-ribulos-1-ylimino)methylamino]-1-(5-phospho-beta-D-ribosyl)imidazole-4-carboxamide. It functions in the pathway amino-acid biosynthesis; L-histidine biosynthesis; L-histidine from 5-phospho-alpha-D-ribose 1-diphosphate: step 4/9. The sequence is that of 1-(5-phosphoribosyl)-5-[(5-phosphoribosylamino)methylideneamino] imidazole-4-carboxamide isomerase from Prochlorococcus marinus (strain SARG / CCMP1375 / SS120).